We begin with the raw amino-acid sequence, 188 residues long: Ion-translocating oxidoreductase complex subunit G (188 aa).

Residues 1 to 9 (MSDSKEITK) are Cytoplasmic-facing. A helical transmembrane segment spans residues 10–30 (VIVTMVVISAVAAALLALTYT). The Extracellular portion of the chain corresponds to 31 to 188 (PTQAQLKLLQ…AVDYVSAQEG (158 aa)). T166 carries the post-translational modification FMN phosphoryl threonine.

This sequence belongs to the RnfG family. The Rnf complex is probably composed of eight subunits, including RnfA, RnfB, RnfC, RnfD, RnfE and RnfG. It depends on FMN as a cofactor.

The protein localises to the cell membrane. In terms of biological role, part of a membrane-bound complex that couples electron transfer with translocation of ions across the membrane. Catalyzes Na(+) transport, most probably coupled to electron transfer from reduced ferredoxin to methanophenazine and heterodisulfide reductase. Involved in heterodisulfide reduction during methanogenesis from acetate. This is Ion-translocating oxidoreductase complex subunit G from Methanosarcina acetivorans (strain ATCC 35395 / DSM 2834 / JCM 12185 / C2A).